Consider the following 130-residue polypeptide: Small ribosomal subunit protein bS6 (130 aa).

The segment at 100–130 (SPMVKAKDERRERHDFASEANDDSEAGDSEE) is disordered. The segment covering 104–116 (KAKDERRERHDFA) has biased composition (basic and acidic residues). The span at 119–130 (ANDDSEAGDSEE) shows a compositional bias: acidic residues.

Belongs to the bacterial ribosomal protein bS6 family.

In terms of biological role, binds together with bS18 to 16S ribosomal RNA. The polypeptide is Small ribosomal subunit protein bS6 (Yersinia pestis (strain Pestoides F)).